We begin with the raw amino-acid sequence, 151 residues long: Brain ribonuclease (151 aa).

Residues 1–25 are disordered; sequence KESAAAKFRRQHMDAGSSSSGNSNY. Residues K7 and R10 each coordinate substrate. H12 serves as the catalytic Proton acceptor. Intrachain disulfides connect C26–C84, C40–C95, C58–C110, and C65–C72. Residue 41–45 coordinates substrate; that stretch reads KPVNT. An N-linked (GlcNAc...) asparagine glycan is attached at N62. Substrate contacts are provided by K66 and R85. H119 acts as the Proton donor in catalysis. T129 carries an O-linked (GalNAc...) threonine glycan. A glycan (O-linked (GalNAc...) serine) is linked at S133.

This sequence belongs to the pancreatic ribonuclease family.

The protein resides in the secreted. The protein is Brain ribonuclease (BRN) of Axis porcinus (Hog deer).